The sequence spans 3172 residues: Erythronolide synthase EryA3 (3172 aa).

The 415-residue stretch at G38–E452 folds into the Ketosynthase family 3 (KS3) 1 domain. 2 module regions span residues I41–L1464 and I1492–G2891. The Acyl-thioester intermediate; for beta-ketoacyl synthase 1 activity role is filled by C199. Catalysis depends on for beta-ketoacyl synthase 1 activity residues H334 and H374. The interval V557–E874 is acyltransferase 1. S643 acts as the Acyl-ester intermediate; for acyltransferase 1 activity in catalysis. A beta-ketoacyl reductase 1 region spans residues G1117–A1294. NADP(+) contacts are provided by residues T1125–I1128, G1148–G1151, D1177–V1178, K1229, and F1249–S1250. Y1264 (acyl-ester intermediate; for beta-ketoacyl reductase 1 activity) is an active-site residue. Residues E1392 to L1467 form the Carrier 1 domain. S1427 is modified (O-(pantetheine 4'-phosphoryl)serine). A Ketosynthase family 3 (KS3) 2 domain is found at D1489–E1916. The active-site Acyl-thioester intermediate; for beta-ketoacyl synthase 2 activity is C1661. Active-site for beta-ketoacyl synthase 2 activity residues include H1797 and H1837. The tract at residues V2022–A2331 is acyltransferase 2. The active-site Acyl-ester intermediate; for acyltransferase 2 activity is the S2112. Positions G2557–A2731 are beta-ketoacyl reductase 2. NADP(+) is bound by residues T2565–L2568, S2588–G2591, D2617–V2618, K2666, and F2686–S2687. Y2701 (acyl-ester intermediate; for beta-ketoacyl reductase 2 activity) is an active-site residue. Positions Q2819–L2894 constitute a Carrier 2 domain. The residue at position 2854 (S2854) is an O-(pantetheine 4'-phosphoryl)serine. Residues I2960–W3166 are thioesterase. T2965 serves as a coordination point for substrate. S3031 serves as the catalytic Nucleophile; for thioesterase activity. Substrate contacts are provided by A3032 and D3058. The active-site Proton acceptor; for thioesterase activity is the H3148.

In terms of assembly, homodimer. Erythronolide synthase is composed of EryAI, EryAII and EryAIII multimodular (2 modules) polypeptides each coding for a functional synthase subunit which participates in 2 of the six FAS-like elongation steps required for formation of the polyketide. Module 1, 2, 3, 4, 5, and 6 participating in biosynthesis steps 1, 2, 3, 4, 5, and 6, respectively. It depends on pantetheine 4'-phosphate as a cofactor.

The catalysed reaction is 6 (S)-methylmalonyl-CoA + propanoyl-CoA + 6 NADPH + 12 H(+) = 6-deoxyerythronolide B + 6 CO2 + 6 NADP(+) + 7 CoA + H2O. The protein operates within antibiotic biosynthesis; erythromycin biosynthesis. With respect to regulation, inhibited by diphenyl phosphonates derivatives such as diphenyl allylphosphonate. Functionally, involved in the biosynthesis of antibiotic erythromycin via the biosynthesis of its aglycone precursor, 6-deoxyerythronolide B (6-dEB). The protein is Erythronolide synthase EryA3 of Saccharopolyspora erythraea (Streptomyces erythraeus).